A 305-amino-acid polypeptide reads, in one-letter code: Glycine betaine-binding protein YehZ (305 aa).

Residues 1–23 form the signal peptide; sequence MPLLKLWAGSLVMLAAVSLPLQA.

Belongs to the OsmX family. The complex is composed of two ATP-binding proteins (YehX), two transmembrane proteins (YehW and YehY) and a solute-binding protein (YehZ).

The protein localises to the periplasm. In terms of biological role, part of an ABC transporter complex involved in low-affinity glycine betaine uptake. Binds glycine betaine with low affinity. This chain is Glycine betaine-binding protein YehZ (yehZ), found in Escherichia coli (strain K12).